A 486-amino-acid polypeptide reads, in one-letter code: Glutamyl-tRNA(Gln) amidotransferase subunit A (486 aa).

Residues Lys80 and Ser155 each act as charge relay system in the active site. Ser179 (acyl-ester intermediate) is an active-site residue.

This sequence belongs to the amidase family. GatA subfamily. Heterotrimer of A, B and C subunits.

The enzyme catalyses L-glutamyl-tRNA(Gln) + L-glutamine + ATP + H2O = L-glutaminyl-tRNA(Gln) + L-glutamate + ADP + phosphate + H(+). Allows the formation of correctly charged Gln-tRNA(Gln) through the transamidation of misacylated Glu-tRNA(Gln) in organisms which lack glutaminyl-tRNA synthetase. The reaction takes place in the presence of glutamine and ATP through an activated gamma-phospho-Glu-tRNA(Gln). The protein is Glutamyl-tRNA(Gln) amidotransferase subunit A of Geobacillus sp. (strain WCH70).